Reading from the N-terminus, the 388-residue chain is Succinate--CoA ligase [ADP-forming] subunit beta (388 aa).

The region spanning 9–244 is the ATP-grasp domain; it reads KSLFAEYGLP…PSQDDAREAH (236 aa). Residues Lys46, 53 to 55, Glu99, Thr102, and Glu107 contribute to the ATP site; that span reads GRG. Residues Asn199 and Asp213 each coordinate Mg(2+). Residues Asn264 and 321-323 contribute to the substrate site; that span reads GIV.

The protein belongs to the succinate/malate CoA ligase beta subunit family. In terms of assembly, heterotetramer of two alpha and two beta subunits. Requires Mg(2+) as cofactor.

The catalysed reaction is succinate + ATP + CoA = succinyl-CoA + ADP + phosphate. The enzyme catalyses GTP + succinate + CoA = succinyl-CoA + GDP + phosphate. Its pathway is carbohydrate metabolism; tricarboxylic acid cycle; succinate from succinyl-CoA (ligase route): step 1/1. In terms of biological role, succinyl-CoA synthetase functions in the citric acid cycle (TCA), coupling the hydrolysis of succinyl-CoA to the synthesis of either ATP or GTP and thus represents the only step of substrate-level phosphorylation in the TCA. The beta subunit provides nucleotide specificity of the enzyme and binds the substrate succinate, while the binding sites for coenzyme A and phosphate are found in the alpha subunit. The polypeptide is Succinate--CoA ligase [ADP-forming] subunit beta (Shewanella denitrificans (strain OS217 / ATCC BAA-1090 / DSM 15013)).